Consider the following 404-residue polypeptide: NADH-quinone oxidoreductase subunit D 1 (404 aa).

This sequence belongs to the complex I 49 kDa subunit family. NDH-1 is composed of 14 different subunits. Subunits NuoB, C, D, E, F, and G constitute the peripheral sector of the complex.

The protein localises to the cell inner membrane. The catalysed reaction is a quinone + NADH + 5 H(+)(in) = a quinol + NAD(+) + 4 H(+)(out). Its function is as follows. NDH-1 shuttles electrons from NADH, via FMN and iron-sulfur (Fe-S) centers, to quinones in the respiratory chain. The immediate electron acceptor for the enzyme in this species is believed to be ubiquinone. Couples the redox reaction to proton translocation (for every two electrons transferred, four hydrogen ions are translocated across the cytoplasmic membrane), and thus conserves the redox energy in a proton gradient. The polypeptide is NADH-quinone oxidoreductase subunit D 1 (Sorangium cellulosum (strain So ce56) (Polyangium cellulosum (strain So ce56))).